Consider the following 579-residue polypeptide: Copine-E (579 aa).

C2 domains are found at residues 45–175 (IDPS…KVIG) and 183–304 (QTGT…EFTL). Aspartate 80, aspartate 86, aspartate 145, aspartate 147, and aspartate 153 together coordinate Ca(2+). Residues 345–552 (NLMIAIDCTA…KKYENDPEQL (208 aa)) form the VWFA domain.

It belongs to the copine family. It depends on Ca(2+) as a cofactor.

This Dictyostelium discoideum (Social amoeba) protein is Copine-E (cpnE).